Reading from the N-terminus, the 263-residue chain is TPR repeat-containing protein DDB_G0285095 (263 aa).

Positions 1-25 (MGCCGSKEKYNGEDVPKSQRLENRP) are enriched in basic and acidic residues. The interval 1 to 62 (MGCCGSKEKY…ASASQQNNPT (62 aa)) is disordered. TPR repeat units follow at residues 87–120 (SDLLAQYGVLLSMEGKNKEAEESLRKAVEVDTDN), 121–154 (SRAWQAYGEFLERTNNPKKAKEVYGEAYKHAAPK), and 162–195 (SSLLLSYAIFIQKSGEIDKAEKLYKRIVTSGARS).

The polypeptide is TPR repeat-containing protein DDB_G0285095 (Dictyostelium discoideum (Social amoeba)).